The sequence spans 843 residues: Protein P (843 aa).

The segment at 1 to 177 is terminal protein domain (TP); the sequence is MPLSYQHFRK…FCGSPYSWEQ (177 aa). The spacer stretch occupies residues 178-346; it reads DLQHGRLVFQ…YCLSHIVNLI (169 aa). Disordered regions lie at residues 219–249 and 290–316; these read RKSR…RIHP and STSK…RSQS. Residues 290–299 are compositionally biased toward polar residues; that stretch reads STSKGHSSSG. The interval 347 to 690 is polymerase/reverse transcriptase domain (RT); that stretch reads EDWGPCAEHG…YMTLYPVARQ (344 aa). One can recognise a Reverse transcriptase domain in the interval 357-600; the sequence is EHRIRTPRTP…YSLNFMGYVI (244 aa). Mg(2+) is bound by residues aspartate 429, aspartate 551, and aspartate 552.

It belongs to the hepadnaviridae P protein family.

The catalysed reaction is DNA(n) + a 2'-deoxyribonucleoside 5'-triphosphate = DNA(n+1) + diphosphate. It carries out the reaction Endonucleolytic cleavage to 5'-phosphomonoester.. Activated by host HSP70 and HSP40 in vitro to be able to bind the epsilon loop of the pgRNA. Because deletion of the RNase H region renders the protein partly chaperone-independent, the chaperones may be needed indirectly to relieve occlusion of the RNA-binding site by this domain. Inhibited by several reverse-transcriptase inhibitors: Lamivudine, Adefovir and Entecavir. Functionally, multifunctional enzyme that converts the viral RNA genome into dsDNA in viral cytoplasmic capsids. This enzyme displays a DNA polymerase activity that can copy either DNA or RNA templates, and a ribonuclease H (RNase H) activity that cleaves the RNA strand of RNA-DNA heteroduplexes in a partially processive 3'- to 5'-endonucleasic mode. Neo-synthesized pregenomic RNA (pgRNA) are encapsidated together with the P protein, and reverse-transcribed inside the nucleocapsid. Initiation of reverse-transcription occurs first by binding the epsilon loop on the pgRNA genome, and is initiated by protein priming, thereby the 5'-end of (-)DNA is covalently linked to P protein. Partial (+)DNA is synthesized from the (-)DNA template and generates the relaxed circular DNA (RC-DNA) genome. After budding and infection, the RC-DNA migrates in the nucleus, and is converted into a plasmid-like covalently closed circular DNA (cccDNA). The activity of P protein does not seem to be necessary for cccDNA generation, and is presumably released from (+)DNA by host nuclear DNA repair machinery. The polypeptide is Protein P (Homo sapiens (Human)).